The chain runs to 38 residues: Large ribosomal subunit protein bL36 (38 aa).

This sequence belongs to the bacterial ribosomal protein bL36 family.

The protein is Large ribosomal subunit protein bL36 of Psychrobacter arcticus (strain DSM 17307 / VKM B-2377 / 273-4).